Here is a 115-residue protein sequence, read N- to C-terminus: Large ribosomal subunit protein P2 (115 aa).

Position 1 is an N-acetylmethionine (Met-1). 2 positions are modified to phosphoserine: Ser-17 and Ser-19. N6-acetyllysine; alternate is present on Lys-21. Lys-21 is modified (N6-succinyllysine; alternate). Residues 76-90 (APGSAAPAAGSAPAA) are compositionally biased toward low complexity. The segment at 76-115 (APGSAAPAAGSAPAAAEEKKEEKKEESEESDDDMGFGLFD) is disordered. 2 positions are modified to phosphoserine: Ser-79 and Ser-86. The segment covering 91 to 101 (AEEKKEEKKEE) has biased composition (basic and acidic residues). 2 positions are modified to phosphoserine: Ser-102 and Ser-105.

The protein belongs to the eukaryotic ribosomal protein P1/P2 family. As to quaternary structure, heterodimer with RPLP1 at the lateral ribosomal stalk of the large ribosomal subunit.

In terms of biological role, plays an important role in the elongation step of protein synthesis. The polypeptide is Large ribosomal subunit protein P2 (RPLP2) (Bos taurus (Bovine)).